The sequence spans 388 residues: Serpin B11 (388 aa).

An RCL region spans residues 338–362 (EEGTEAAAATGESISVKRLPVTVQF).

Belongs to the serpin family. Ov-serpin subfamily. As to expression, expressed in eye, lung, lymphocytes, thymus, stomach, uterus, heart, brain, liver, skeletal muscle, and in day 7, 15, and 17 embryos.

The protein localises to the cytoplasm. Inhibitor of serine proteases. Has moderate inhibitory activity for trypsin-like peptidases, but also some activity with cysteine peptidases, cathepsin L, K, and V, and the serine peptidase, tryptase gamma. In Mus musculus (Mouse), this protein is Serpin B11 (Serpinb11).